The primary structure comprises 196 residues: Imidazoleglycerol-phosphate dehydratase (196 aa).

Belongs to the imidazoleglycerol-phosphate dehydratase family.

It is found in the cytoplasm. It catalyses the reaction D-erythro-1-(imidazol-4-yl)glycerol 3-phosphate = 3-(imidazol-4-yl)-2-oxopropyl phosphate + H2O. The protein operates within amino-acid biosynthesis; L-histidine biosynthesis; L-histidine from 5-phospho-alpha-D-ribose 1-diphosphate: step 6/9. The polypeptide is Imidazoleglycerol-phosphate dehydratase (Nitratidesulfovibrio vulgaris (strain DSM 19637 / Miyazaki F) (Desulfovibrio vulgaris)).